The sequence spans 254 residues: Photosystem II 22 kDa protein 2, chloroplastic (254 aa).

Residues 1 to 38 constitute a chloroplast transit peptide; it reads MALQQSMAMPMMVVSDLGTAPRSSPMVQLQRMKKHLVV. Repeat copies occupy residues 42 to 148 and 149 to 253. Helical transmembrane passes span 86 to 106, 120 to 140, 184 to 204, and 219 to 239; these read VAMLGFAASLLGEAVTGKGIL, AEPLLLFFILFTLLGAIGALG, LFVGRLAQLGIAFSLIGEIIT, and PINEIEPLLLFNILFFFFAAI.

This sequence belongs to the ELIP/psbS family.

It is found in the plastid. The protein resides in the chloroplast thylakoid membrane. Functionally, involved in high light-mediated energy-dependent nonphotochemical quenching (NPQ, qE) and thermal dissipation (TD) thus regulating energy conversion in photosystem II and protecting from photoinhibition. Also seems to regulate quantum yield of electron transport in fluctuating light conditions. In Oryza sativa subsp. japonica (Rice), this protein is Photosystem II 22 kDa protein 2, chloroplastic.